Here is a 374-residue protein sequence, read N- to C-terminus: MQNTSFDNESDYSDDSDFASASETENRIGLTVPLELAGGRLDAVLAKLLPDYSRSRLTSWIKEGAVIVNDKPSQPKDKMIGGEQICVTVRPSEENLAFVPEPMALDIVYEDDTVIVVNKPAGLVVHPAAGNWTGTLLNGLLAHCPELSQVPRAGIVHRLDKETSGLMVVAKTLPAQNSLVRQLQERTVKRIYRAVANGIVPFDGKIETQIGRDPHNRLKMAVVKFGGKPAVTHVKVLERYLTHSYIECSLETGRTHQIRVHMREANHPLAADPVYGNPRHPCGDTVKEAVKSLGARQALHAYRLSFTHPESGETVSFEAPIPNDIYHLLSVLRLEAGLDSSLSNEEEWQDKFGADDDDDWNEDDYDVEVVYVRE.

The disordered stretch occupies residues methionine 1 to serine 20. Acidic residues predominate over residues asparagine 8–aspartate 17. One can recognise an S4 RNA-binding domain in the interval glycine 39 to aspartate 112. Aspartate 160 is an active-site residue.

Belongs to the pseudouridine synthase RluA family.

It localises to the cytoplasm. It catalyses the reaction uridine(1911/1915/1917) in 23S rRNA = pseudouridine(1911/1915/1917) in 23S rRNA. Responsible for synthesis of pseudouridine from uracil at positions 1911, 1915 and 1917 in 23S ribosomal RNA. In Neisseria meningitidis serogroup B (strain ATCC BAA-335 / MC58), this protein is Ribosomal large subunit pseudouridine synthase D (rluD).